A 339-amino-acid polypeptide reads, in one-letter code: DNA-directed RNA polymerase subunit alpha (339 aa).

The tract at residues 1–235 (MVIQKNWQEL…DQLQVFVNFE (235 aa)) is alpha N-terminal domain (alpha-NTD). Residues 251–339 (FNPALLKKVD…DLAKRFEEHY (89 aa)) are alpha C-terminal domain (alpha-CTD).

Belongs to the RNA polymerase alpha chain family. Homodimer. The RNAP catalytic core consists of 2 alpha, 1 beta, 1 beta' and 1 omega subunit. When a sigma factor is associated with the core the holoenzyme is formed, which can initiate transcription.

The enzyme catalyses RNA(n) + a ribonucleoside 5'-triphosphate = RNA(n+1) + diphosphate. In terms of biological role, DNA-dependent RNA polymerase catalyzes the transcription of DNA into RNA using the four ribonucleoside triphosphates as substrates. This Methylobacterium radiotolerans (strain ATCC 27329 / DSM 1819 / JCM 2831 / NBRC 15690 / NCIMB 10815 / 0-1) protein is DNA-directed RNA polymerase subunit alpha.